The chain runs to 241 residues: Small ribosomal subunit protein uS3 (241 aa).

The region spanning 39–109 (IRQHVEKNLS…QIRINVIEVS (71 aa)) is the KH type-2 domain. The tract at residues 215 to 241 (EQAMAAPAPTPRKKRRPQQFEDRSNEE) is disordered. The span at 232 to 241 (QQFEDRSNEE) shows a compositional bias: basic and acidic residues.

The protein belongs to the universal ribosomal protein uS3 family. In terms of assembly, part of the 30S ribosomal subunit. Forms a tight complex with proteins S10 and S14.

Functionally, binds the lower part of the 30S subunit head. Binds mRNA in the 70S ribosome, positioning it for translation. In Crocosphaera subtropica (strain ATCC 51142 / BH68) (Cyanothece sp. (strain ATCC 51142)), this protein is Small ribosomal subunit protein uS3.